The following is a 1059-amino-acid chain: Carbamoyl phosphate synthase large chain (1059 aa).

A carboxyphosphate synthetic domain region spans residues 1–401 (MPKRKDIQKV…AMLKAVRSLE (401 aa)). ATP-binding residues include R129, R169, G175, G176, R208, I210, E215, G241, V242, H243, Q284, and E298. Residues 133-327 (KALMERLNEP…IAKMAAKIAV (195 aa)) enclose the ATP-grasp 1 domain. Mg(2+) contacts are provided by Q284, E298, and N300. Q284, E298, and N300 together coordinate Mn(2+). The interval 402-546 (IGVTGLNDLT…YATYERENES (145 aa)) is oligomerization domain. Residues 547–929 (VRSKKPSVIV…ALYKAFVASN (383 aa)) are carbamoyl phosphate synthetic domain. Positions 671 to 861 (DQVIKTLALP…LAQLATRVML (191 aa)) constitute an ATP-grasp 2 domain. Residues R707, S746, L748, E752, G777, V778, H779, S780, Q820, and E832 each contribute to the ATP site. Mg(2+) contacts are provided by Q820, E832, and N834. Residues Q820, E832, and N834 each contribute to the Mn(2+) site. The MGS-like domain occupies 930–1059 (IKVPQYGNVL…SRSFTVNEMK (130 aa)). The allosteric domain stretch occupies residues 930–1059 (IKVPQYGNVL…SRSFTVNEMK (130 aa)).

The protein belongs to the CarB family. As to quaternary structure, composed of two chains; the small (or glutamine) chain promotes the hydrolysis of glutamine to ammonia, which is used by the large (or ammonia) chain to synthesize carbamoyl phosphate. Tetramer of heterodimers (alpha,beta)4. Requires Mg(2+) as cofactor. It depends on Mn(2+) as a cofactor.

It carries out the reaction hydrogencarbonate + L-glutamine + 2 ATP + H2O = carbamoyl phosphate + L-glutamate + 2 ADP + phosphate + 2 H(+). The enzyme catalyses hydrogencarbonate + NH4(+) + 2 ATP = carbamoyl phosphate + 2 ADP + phosphate + 2 H(+). Its pathway is amino-acid biosynthesis; L-arginine biosynthesis; carbamoyl phosphate from bicarbonate: step 1/1. The protein operates within pyrimidine metabolism; UMP biosynthesis via de novo pathway; (S)-dihydroorotate from bicarbonate: step 1/3. Its function is as follows. Large subunit of the glutamine-dependent carbamoyl phosphate synthetase (CPSase). CPSase catalyzes the formation of carbamoyl phosphate from the ammonia moiety of glutamine, carbonate, and phosphate donated by ATP, constituting the first step of 2 biosynthetic pathways, one leading to arginine and/or urea and the other to pyrimidine nucleotides. The large subunit (synthetase) binds the substrates ammonia (free or transferred from glutamine from the small subunit), hydrogencarbonate and ATP and carries out an ATP-coupled ligase reaction, activating hydrogencarbonate by forming carboxy phosphate which reacts with ammonia to form carbamoyl phosphate. This is Carbamoyl phosphate synthase large chain from Leuconostoc citreum (strain KM20).